The chain runs to 567 residues: Eukaryotic translation initiation factor 3 subunit D (567 aa).

2 disordered regions span residues 12–34 (PVKS…YAPF) and 122–160 (GQNV…RGRR). Residues 128–142 (GGRGGRYGSSGGRGA) are compositionally biased toward gly residues. The interval 300 to 314 (PFDYLTVNENAYDSP) is RNA gate.

It belongs to the eIF-3 subunit D family. In terms of assembly, component of the eukaryotic translation initiation factor 3 (eIF-3) complex. The eIF-3 complex appears to include tif32/eif3a, SPAC25G10.08/eif3b, tif33/eif3c, SPBC4C3.07/eif3f, tif35/eif3g and sum1/eif3i. This set of common subunits may also associate exclusively with either moe1/eif3d and int6/eif3e, or with SPAC821.05/eif3h and SPAC1751.03/eif3m. The eIF-3 complex may also include SPAC3A12.13c/eif3j.

It localises to the cytoplasm. Functionally, mRNA cap-binding component of the eukaryotic translation initiation factor 3 (eIF-3) complex, which is involved in protein synthesis of a specialized repertoire of mRNAs and, together with other initiation factors, stimulates binding of mRNA and methionyl-tRNAi to the 40S ribosome. The eIF-3 complex specifically targets and initiates translation of a subset of mRNAs involved in cell proliferation. In the eIF-3 complex, eif3d specifically recognizes and binds the 7-methylguanosine cap of a subset of mRNAs. The sequence is that of Eukaryotic translation initiation factor 3 subunit D (moe1) from Schizosaccharomyces pombe (strain 972 / ATCC 24843) (Fission yeast).